A 117-amino-acid chain; its full sequence is Large ribosomal subunit protein bL17 (117 aa).

It belongs to the bacterial ribosomal protein bL17 family. In terms of assembly, part of the 50S ribosomal subunit. Contacts protein L32.

This Coprothermobacter proteolyticus (strain ATCC 35245 / DSM 5265 / OCM 4 / BT) protein is Large ribosomal subunit protein bL17.